A 143-amino-acid polypeptide reads, in one-letter code: MFMGEYHHNLDNKGRLIIPAKLRDQIENKMVFTRGMEGCIFGYSMEEWQKIEAKLAKLPLTKRNTRKFMRLFYSGAMESEFDKQGRVNFTSTLKAHAGLIKECVIIGVSDRIEIWAKERWDSFEEEANEDYDDIAENLDDIEL.

2 consecutive SpoVT-AbrB domains span residues 5-47 (EYHH…SMEE) and 76-119 (AMES…AKER).

It belongs to the MraZ family. As to quaternary structure, forms oligomers.

It localises to the cytoplasm. The protein resides in the nucleoid. The polypeptide is Transcriptional regulator MraZ (Lactobacillus helveticus (strain DPC 4571)).